The chain runs to 641 residues: tRNA 5-methylaminomethyl-2-thiouridine biosynthesis bifunctional protein MnmC (641 aa).

The tract at residues 1–219 (MTVSKILKQI…PYPICSAAVT (219 aa)) is tRNA (mnm(5)s(2)U34)-methyltransferase. An FAD-dependent cmnm(5)s(2)U34 oxidoreductase region spans residues 232–641 (IGGGVASACL…GKALEVGVEV (410 aa)).

The protein in the N-terminal section; belongs to the methyltransferase superfamily. tRNA (mnm(5)s(2)U34)-methyltransferase family. It in the C-terminal section; belongs to the DAO family. Requires FAD as cofactor.

It localises to the cytoplasm. It catalyses the reaction 5-aminomethyl-2-thiouridine(34) in tRNA + S-adenosyl-L-methionine = 5-methylaminomethyl-2-thiouridine(34) in tRNA + S-adenosyl-L-homocysteine + H(+). In terms of biological role, catalyzes the last two steps in the biosynthesis of 5-methylaminomethyl-2-thiouridine (mnm(5)s(2)U) at the wobble position (U34) in tRNA. Catalyzes the FAD-dependent demodification of cmnm(5)s(2)U34 to nm(5)s(2)U34, followed by the transfer of a methyl group from S-adenosyl-L-methionine to nm(5)s(2)U34, to form mnm(5)s(2)U34. This Shewanella pealeana (strain ATCC 700345 / ANG-SQ1) protein is tRNA 5-methylaminomethyl-2-thiouridine biosynthesis bifunctional protein MnmC.